Reading from the N-terminus, the 846-residue chain is Iron-sulfur cluster assembly SufBD family protein Mb1496 (846 aa).

The interval 1–20 (MTLTPEASKSVAQPPTQAPL) is disordered. Residues 388–528 (LAGYYLAEGH…LQSILARLGH (141 aa)) enclose the DOD-type homing endonuclease domain.

It belongs to the iron-sulfur cluster assembly SufBD family. In terms of processing, this protein undergoes a protein self splicing that involves a post-translational excision of the intervening region (intein) followed by peptide ligation.

The protein is Iron-sulfur cluster assembly SufBD family protein Mb1496 of Mycobacterium bovis (strain ATCC BAA-935 / AF2122/97).